A 186-amino-acid polypeptide reads, in one-letter code: ATP synthase subunit delta (186 aa).

It belongs to the ATPase delta chain family. As to quaternary structure, F-type ATPases have 2 components, F(1) - the catalytic core - and F(0) - the membrane proton channel. F(1) has five subunits: alpha(3), beta(3), gamma(1), delta(1), epsilon(1). F(0) has three main subunits: a(1), b(2) and c(10-14). The alpha and beta chains form an alternating ring which encloses part of the gamma chain. F(1) is attached to F(0) by a central stalk formed by the gamma and epsilon chains, while a peripheral stalk is formed by the delta and b chains.

It localises to the cell membrane. In terms of biological role, f(1)F(0) ATP synthase produces ATP from ADP in the presence of a proton or sodium gradient. F-type ATPases consist of two structural domains, F(1) containing the extramembraneous catalytic core and F(0) containing the membrane proton channel, linked together by a central stalk and a peripheral stalk. During catalysis, ATP synthesis in the catalytic domain of F(1) is coupled via a rotary mechanism of the central stalk subunits to proton translocation. This protein is part of the stalk that links CF(0) to CF(1). It either transmits conformational changes from CF(0) to CF(1) or is implicated in proton conduction. The polypeptide is ATP synthase subunit delta (Symbiobacterium thermophilum (strain DSM 24528 / JCM 14929 / IAM 14863 / T)).